The sequence spans 432 residues: Glutamate-1-semialdehyde 2,1-aminomutase (432 aa).

The residue at position 272 (Lys-272) is an N6-(pyridoxal phosphate)lysine.

The protein belongs to the class-III pyridoxal-phosphate-dependent aminotransferase family. HemL subfamily. In terms of assembly, homodimer. The cofactor is pyridoxal 5'-phosphate.

Its subcellular location is the cytoplasm. It catalyses the reaction (S)-4-amino-5-oxopentanoate = 5-aminolevulinate. The protein operates within porphyrin-containing compound metabolism; protoporphyrin-IX biosynthesis; 5-aminolevulinate from L-glutamyl-tRNA(Glu): step 2/2. It functions in the pathway porphyrin-containing compound metabolism; chlorophyll biosynthesis. This Trichodesmium erythraeum (strain IMS101) protein is Glutamate-1-semialdehyde 2,1-aminomutase.